The sequence spans 308 residues: Tetraacyldisaccharide 4'-kinase (308 aa).

63 to 70 (SFGGNGKT) lines the ATP pocket.

It belongs to the LpxK family.

It carries out the reaction a lipid A disaccharide + ATP = a lipid IVA + ADP + H(+). The protein operates within glycolipid biosynthesis; lipid IV(A) biosynthesis; lipid IV(A) from (3R)-3-hydroxytetradecanoyl-[acyl-carrier-protein] and UDP-N-acetyl-alpha-D-glucosamine: step 6/6. Its function is as follows. Transfers the gamma-phosphate of ATP to the 4'-position of a tetraacyldisaccharide 1-phosphate intermediate (termed DS-1-P) to form tetraacyldisaccharide 1,4'-bis-phosphate (lipid IVA). This is Tetraacyldisaccharide 4'-kinase from Campylobacter jejuni subsp. jejuni serotype O:23/36 (strain 81-176).